A 210-amino-acid chain; its full sequence is Uridine kinase P10 (210 aa).

Position 10–18 (10–18 (GISGSGKST)) interacts with ATP. Asp41 is an active-site residue.

This sequence belongs to the uridine kinase family. Interacts with host eIF-2B; this interaction disrupts the interaction between eIF2 and eIF-2B, which leads to the inhibition of stress granules formation.

It is found in the host cytoplasm. It localises to the host perinuclear region. It carries out the reaction uridine + ATP = UMP + ADP + H(+). Functionally, inhibits the integrated stress response (ISR) in the infected cell by preventing the sequestration of eIF2B by phosphorylated EIF2S1/eIF-2alpha. Stress granule formation in response to EIF2S1/eIF-2alpha phosphorylation is thus inhibited, which allows protein synthesis and viral replication. Phosphorylates uridine to uridine monophosphate. This chain is Uridine kinase P10 (ORF10), found in Beluga whale coronavirus (strain SW1) (BwCoV).